The sequence spans 413 residues: uncharacterized protein (413 aa).

This is an uncharacterized protein from Mycoplasma pneumoniae (strain ATCC 29342 / M129 / Subtype 1) (Mycoplasmoides pneumoniae).